Consider the following 539-residue polypeptide: Hydroxylamine reductase (539 aa).

The [4Fe-4S] cluster site is built by cysteine 3, cysteine 6, cysteine 14, and cysteine 20. Histidine 232, glutamate 256, cysteine 300, cysteine 392, cysteine 420, cysteine 445, glutamate 480, and lysine 482 together coordinate hybrid [4Fe-2O-2S] cluster. Cysteine 392 bears the Cysteine persulfide mark.

It belongs to the HCP family. [4Fe-4S] cluster serves as cofactor. Hybrid [4Fe-2O-2S] cluster is required as a cofactor.

The protein localises to the cytoplasm. It catalyses the reaction A + NH4(+) + H2O = hydroxylamine + AH2 + H(+). Functionally, catalyzes the reduction of hydroxylamine to form NH(3) and H(2)O. This Chlorobaculum tepidum (strain ATCC 49652 / DSM 12025 / NBRC 103806 / TLS) (Chlorobium tepidum) protein is Hydroxylamine reductase.